We begin with the raw amino-acid sequence, 329 residues long: E3 ubiquitin-protein ligase SINA-like 4 (329 aa).

The segment covering 1–12 (MTKLGRRNDGGG) has biased composition (basic and acidic residues). The interval 1–58 (MTKLGRRNDGGGKSHRSSTKRQRRTSVSVDDPSPGEEEEKTLVVLTDDSDSEEDDKPL) is disordered. Basic residues predominate over residues 13–24 (KSHRSSTKRQRR). The RING-type; degenerate zinc finger occupies 86 to 122 (CPNCFDPLKKPIFQCNNGHLACFLCCIKLKKRCSFCK). Positions 136 to 325 (VIKAGLVSCS…MEISIGDKND (190 aa)) are SBD. Residues 139–198 (AGLVSCSNAIYGCKQSTTYGNQLQSHEKVCVFAPCSCPIKDCNYIGFYKDLINHFRATHK) form an SIAH-type zinc finger. 8 residues coordinate Zn(2+): Cys144, Cys151, His164, Cys168, Cys175, Cys180, His192, and His197.

Belongs to the SINA (Seven in absentia) family.

The enzyme catalyses S-ubiquitinyl-[E2 ubiquitin-conjugating enzyme]-L-cysteine + [acceptor protein]-L-lysine = [E2 ubiquitin-conjugating enzyme]-L-cysteine + N(6)-ubiquitinyl-[acceptor protein]-L-lysine.. Its pathway is protein modification; protein ubiquitination. In terms of biological role, E3 ubiquitin-protein ligase that mediates ubiquitination and subsequent proteasomal degradation of target proteins. E3 ubiquitin ligases accept ubiquitin from an E2 ubiquitin-conjugating enzyme in the form of a thioester and then directly transfers the ubiquitin to targeted substrates. It probably triggers the ubiquitin-mediated degradation of different substrates. The sequence is that of E3 ubiquitin-protein ligase SINA-like 4 from Arabidopsis thaliana (Mouse-ear cress).